We begin with the raw amino-acid sequence, 247 residues long: MNVLLCSINTLNRFYDISALEVGQHFYWQIGDFQVHAQVLITSWVVIAILLISTILVVRNPQTIPTSGQNFFEYVLEFIRDVSKTQIGEEYGPWVPFIGTLFLFIFVSNWSGALLPWKIIKLPHGELAAPTNDINTTVALALLTSVAYFYAGISKKGLAYFGKYIQPTPILLPINILEDFTKPLSLSFRLFGNILADELVVVVLVSLVPLVIPIPVMFLGLFTSGIQALIFATLAAAYIGESMEGHH.

Transmembrane regions (helical) follow at residues 38-58 (QVLI…ILVV), 95-115 (VPFI…GALL), 134-154 (INTT…AGIS), 199-219 (LVVV…VMFL), and 220-240 (GLFT…AYIG).

The protein belongs to the ATPase A chain family. As to quaternary structure, F-type ATPases have 2 components, CF(1) - the catalytic core - and CF(0) - the membrane proton channel. CF(1) has five subunits: alpha(3), beta(3), gamma(1), delta(1), epsilon(1). CF(0) has four main subunits: a, b, b' and c.

The protein localises to the plastid. It is found in the chloroplast thylakoid membrane. In terms of biological role, key component of the proton channel; it plays a direct role in the translocation of protons across the membrane. The polypeptide is ATP synthase subunit a, chloroplastic (Cicer arietinum (Chickpea)).